The sequence spans 450 residues: Tubulin alpha chain (450 aa).

Q11 contributes to the GTP binding site. K40 carries the N6-acetyllysine modification. Residues E71, S140, G144, T145, T179, N206, and N228 each coordinate GTP. E71 provides a ligand contact to Mg(2+). E254 is an active-site residue. Residues 431 to 450 (DYEEVGTDSVGEEDEEGEEY) are disordered.

This sequence belongs to the tubulin family. As to quaternary structure, dimer of alpha and beta chains. A typical microtubule is a hollow water-filled tube with an outer diameter of 25 nm and an inner diameter of 15 nM. Alpha-beta heterodimers associate head-to-tail to form protofilaments running lengthwise along the microtubule wall with the beta-tubulin subunit facing the microtubule plus end conferring a structural polarity. Microtubules usually have 13 protofilaments but different protofilament numbers can be found in some organisms and specialized cells. It depends on Mg(2+) as a cofactor. Post-translationally, some glutamate residues at the C-terminus are polyglycylated, resulting in polyglycine chains on the gamma-carboxyl group. Glycylation is mainly limited to tubulin incorporated into axonemes (cilia and flagella) whereas glutamylation is prevalent in neuronal cells, centrioles, axonemes, and the mitotic spindle. Both modifications can coexist on the same protein on adjacent residues, and lowering polyglycylation levels increases polyglutamylation, and reciprocally. The precise function of polyglycylation is still unclear. Some glutamate residues at the C-terminus are polyglutamylated, resulting in polyglutamate chains on the gamma-carboxyl group. Polyglutamylation plays a key role in microtubule severing by spastin (SPAST). SPAST preferentially recognizes and acts on microtubules decorated with short polyglutamate tails: severing activity by SPAST increases as the number of glutamates per tubulin rises from one to eight, but decreases beyond this glutamylation threshold. In terms of processing, acetylation of alpha chains at Lys-40 is located inside the microtubule lumen. This modification has been correlated with increased microtubule stability, intracellular transport and ciliary assembly. Post-translationally, undergoes a tyrosination/detyrosination cycle, the cyclic removal and re-addition of a C-terminal tyrosine residue by the enzymes tubulin tyrosine carboxypeptidase (MATCAP, VASH1 or VASH2) and tubulin tyrosine ligase (TTL), respectively. Tyrosination promotes microtubule interaction with CAP-Gly microtubule plus-end tracking proteins. Tyrosinated tubulins regulate the initiation of dynein-driven motility. In terms of processing, detyrosination is involved in metaphase plate congression by guiding chromosomes during mitosis. Detyrosination increases microtubules-dependent mechanotransduction in dystrophic cardiac and skeletal muscle. In cardiomyocytes, detyrosinated microtubules are required to resist to contractile compression during contraction.

The protein localises to the cytoplasm. It is found in the cytoskeleton. It carries out the reaction GTP + H2O = GDP + phosphate + H(+). Tubulin is the major constituent of microtubules, a cylinder consisting of laterally associated linear protofilaments composed of alpha- and beta-tubulin heterodimers. Microtubules grow by the addition of GTP-tubulin dimers to the microtubule end, where a stabilizing cap forms. Below the cap, tubulin dimers are in GDP-bound state, owing to GTPase activity of alpha-tubulin. In Oncorhynchus keta (Chum salmon), this protein is Tubulin alpha chain.